Here is a 202-residue protein sequence, read N- to C-terminus: Solute carrier family 66 member 3 (202 aa).

The N-terminal stretch at 1-19 (MEAGLLWFCNWSTLGVCAA) is a signal peptide. 4 helical membrane passes run 33-53 (SARG…LVFL), 64-84 (LTYL…LFVF), 94-114 (LPYM…KWII), and 171-191 (LTIL…TATV).

The protein resides in the membrane. The chain is Solute carrier family 66 member 3 (Slc66a3) from Mus musculus (Mouse).